The chain runs to 185 residues: UPF0301 protein Shew_1144 (185 aa).

Belongs to the UPF0301 (AlgH) family.

The sequence is that of UPF0301 protein Shew_1144 from Shewanella loihica (strain ATCC BAA-1088 / PV-4).